Reading from the N-terminus, the 1435-residue chain is Guanine nucleotide exchange factor LTE1 (1435 aa).

The N-terminal Ras-GEF domain occupies 25-157 (VSKPVNSADL…SCIINLKKNW (133 aa)). Residues 235–256 (KLQSSNSSKNQRSPSMLLFPDN) form a disordered region. Positions 237–249 (QSSNSSKNQRSPS) are enriched in low complexity. The residue at position 271 (S271) is a Phosphoserine. The segment at 338 to 365 (QSGTLQGTSTTSSLDNNSNSNSRSNTSS) is disordered. S559 is subject to Phosphoserine. Residues 582–606 (KDNSSSRTDENGPQRLLFHETDKTN) show a composition bias toward basic and acidic residues. The disordered stretch occupies residues 582-689 (KDNSSSRTDE…VRNIVNNTDS (108 aa)). The span at 621–632 (SQSQKSMTSSPL) shows a compositional bias: polar residues. Residues 654 to 667 (SITYSYDSELSSSS) show a composition bias toward low complexity. S689 carries the phosphoserine modification. A Phosphothreonine modification is found at T691. The span at 723 to 744 (EKNYDNKENQESEYESTKKLDN) shows a compositional bias: basic and acidic residues. Residues 723 to 747 (EKNYDNKENQESEYESTKKLDNSLD) are disordered. A phosphoserine mark is found at S808 and S810. Positions 851-871 (AQNSPLKQTQNPQREFPNGTS) are disordered. 2 positions are modified to phosphoserine: S1028 and S1109. The Ras-GEF domain maps to 1194-1434 (DSLSVAQQMT…LTQEEINELS (241 aa)).

It belongs to the LTE1 family. Interacts with CDC24, CDC42, KEL1, KEL2, RAS2 and TEM1. Post-translationally, phosphorylated by CDC28 in a cell cycle-dependent manner and in response to nocodazole. Dephosphorylion by CDC14 triggers LTE1 release from bud cortex during the exit of mitosis.

The protein resides in the cytoplasm. Its subcellular location is the bud. Its function is as follows. GDP-GTP exchange factor for TEM1, a Ras-like protein, component of the mitotic exit network (MEN). Activation of TEM1 by LTE1 in the bud ultimately leads to activation of CDC15 followed by the release of CDC14 from the nucleolus, which then inactivates cyclin-dependent kinases (CDKs) activity by several mechanism. Required for TEM1 localization to the bud cortex during mitotic exit. Fine-tunes the timing of the mitotic exit and couples this event with cytokinesis. Involved in proprotein-processing like proalpha factor-processing in the secretory pathway. The protein is Guanine nucleotide exchange factor LTE1 (LTE1) of Saccharomyces cerevisiae (strain ATCC 204508 / S288c) (Baker's yeast).